The sequence spans 248 residues: Pyridoxine 5'-phosphate synthase (248 aa).

Asn12 contributes to the 3-amino-2-oxopropyl phosphate binding site. Position 14 to 15 (14 to 15 (DH)) interacts with 1-deoxy-D-xylulose 5-phosphate. Position 23 (Arg23) interacts with 3-amino-2-oxopropyl phosphate. His48 serves as the catalytic Proton acceptor. 1-deoxy-D-xylulose 5-phosphate contacts are provided by Arg50 and His55. The active-site Proton acceptor is Glu75. Thr105 contacts 1-deoxy-D-xylulose 5-phosphate. Residue His199 is the Proton donor of the active site. 3-amino-2-oxopropyl phosphate-binding positions include Gly200 and 221-222 (GH).

This sequence belongs to the PNP synthase family. As to quaternary structure, homooctamer; tetramer of dimers.

It is found in the cytoplasm. The catalysed reaction is 3-amino-2-oxopropyl phosphate + 1-deoxy-D-xylulose 5-phosphate = pyridoxine 5'-phosphate + phosphate + 2 H2O + H(+). Its pathway is cofactor biosynthesis; pyridoxine 5'-phosphate biosynthesis; pyridoxine 5'-phosphate from D-erythrose 4-phosphate: step 5/5. Catalyzes the complicated ring closure reaction between the two acyclic compounds 1-deoxy-D-xylulose-5-phosphate (DXP) and 3-amino-2-oxopropyl phosphate (1-amino-acetone-3-phosphate or AAP) to form pyridoxine 5'-phosphate (PNP) and inorganic phosphate. The chain is Pyridoxine 5'-phosphate synthase from Jannaschia sp. (strain CCS1).